Here is a 385-residue protein sequence, read N- to C-terminus: 1-deoxy-D-xylulose 5-phosphate reductoisomerase (385 aa).

The NADPH site is built by Thr10, Gly11, Ser12, Ile13, Lys37, and Asn124. Residue Lys125 participates in 1-deoxy-D-xylulose 5-phosphate binding. Glu126 lines the NADPH pocket. Mn(2+) is bound at residue Asp150. Positions 151, 152, 176, and 199 each coordinate 1-deoxy-D-xylulose 5-phosphate. Residue Glu152 coordinates Mn(2+). Residue Gly205 coordinates NADPH. 4 residues coordinate 1-deoxy-D-xylulose 5-phosphate: Ser212, Asn217, Lys218, and Glu221. Residue Glu221 coordinates Mn(2+).

The protein belongs to the DXR family. Requires Mg(2+) as cofactor. The cofactor is Mn(2+).

It carries out the reaction 2-C-methyl-D-erythritol 4-phosphate + NADP(+) = 1-deoxy-D-xylulose 5-phosphate + NADPH + H(+). The protein operates within isoprenoid biosynthesis; isopentenyl diphosphate biosynthesis via DXP pathway; isopentenyl diphosphate from 1-deoxy-D-xylulose 5-phosphate: step 1/6. In terms of biological role, catalyzes the NADPH-dependent rearrangement and reduction of 1-deoxy-D-xylulose-5-phosphate (DXP) to 2-C-methyl-D-erythritol 4-phosphate (MEP). The chain is 1-deoxy-D-xylulose 5-phosphate reductoisomerase from Clostridium botulinum (strain 657 / Type Ba4).